Here is a 568-residue protein sequence, read N- to C-terminus: Glucose-6-phosphate isomerase, cytosolic (568 aa).

The active-site Proton donor is glutamate 360. Residues histidine 391 and lysine 516 contribute to the active site.

The protein belongs to the GPI family. Homodimer.

The protein resides in the cytoplasm. It catalyses the reaction alpha-D-glucose 6-phosphate = beta-D-fructose 6-phosphate. It participates in carbohydrate degradation; glycolysis; D-glyceraldehyde 3-phosphate and glycerone phosphate from D-glucose: step 2/4. The polypeptide is Glucose-6-phosphate isomerase, cytosolic (PGIC) (Oenothera sinuata var. hirsuta (Mexican evening primrose)).